The sequence spans 214 residues: Thiamine-phosphate synthase (214 aa).

Residues 37-41 and N69 each bind 4-amino-2-methyl-5-(diphosphooxymethyl)pyrimidine; that span reads QLRDK. Mg(2+) contacts are provided by D70 and D89. 4-amino-2-methyl-5-(diphosphooxymethyl)pyrimidine is bound at residue S108. 134–136 contacts 2-[(2R,5Z)-2-carboxy-4-methylthiazol-5(2H)-ylidene]ethyl phosphate; the sequence is TDS. K137 is a binding site for 4-amino-2-methyl-5-(diphosphooxymethyl)pyrimidine. 2-[(2R,5Z)-2-carboxy-4-methylthiazol-5(2H)-ylidene]ethyl phosphate-binding positions include G167 and 187-188; that span reads IS.

Belongs to the thiamine-phosphate synthase family. The cofactor is Mg(2+).

The enzyme catalyses 2-[(2R,5Z)-2-carboxy-4-methylthiazol-5(2H)-ylidene]ethyl phosphate + 4-amino-2-methyl-5-(diphosphooxymethyl)pyrimidine + 2 H(+) = thiamine phosphate + CO2 + diphosphate. It catalyses the reaction 2-(2-carboxy-4-methylthiazol-5-yl)ethyl phosphate + 4-amino-2-methyl-5-(diphosphooxymethyl)pyrimidine + 2 H(+) = thiamine phosphate + CO2 + diphosphate. It carries out the reaction 4-methyl-5-(2-phosphooxyethyl)-thiazole + 4-amino-2-methyl-5-(diphosphooxymethyl)pyrimidine + H(+) = thiamine phosphate + diphosphate. The protein operates within cofactor biosynthesis; thiamine diphosphate biosynthesis; thiamine phosphate from 4-amino-2-methyl-5-diphosphomethylpyrimidine and 4-methyl-5-(2-phosphoethyl)-thiazole: step 1/1. Condenses 4-methyl-5-(beta-hydroxyethyl)thiazole monophosphate (THZ-P) and 2-methyl-4-amino-5-hydroxymethyl pyrimidine pyrophosphate (HMP-PP) to form thiamine monophosphate (TMP). This chain is Thiamine-phosphate synthase, found in Natronomonas pharaonis (strain ATCC 35678 / DSM 2160 / CIP 103997 / JCM 8858 / NBRC 14720 / NCIMB 2260 / Gabara) (Halobacterium pharaonis).